A 789-amino-acid polypeptide reads, in one-letter code: Probable DNA helicase MCM8 (789 aa).

The C4-type zinc finger occupies 174 to 201; that stretch reads CMKCATKFPRVFCDGKFSPPVSCSIQGC. One can recognise an MCM domain in the interval 339 to 546; the sequence is VFRQILHSFC…LLDKRVSDHI (208 aa). 391 to 398 provides a ligand contact to ATP; the sequence is GDPGLGKS. The Arginine finger motif lies at 522 to 525; the sequence is SRFD.

This sequence belongs to the MCM family.

Its subcellular location is the nucleus. The catalysed reaction is ATP + H2O = ADP + phosphate + H(+). Its function is as follows. Probable DNA helicase that may play a role in DNA repair durin meiosis. The polypeptide is Probable DNA helicase MCM8 (MCM8) (Oryza sativa subsp. indica (Rice)).